A 240-amino-acid chain; its full sequence is Sugar fermentation stimulation protein homolog (240 aa).

This sequence belongs to the SfsA family.

The protein is Sugar fermentation stimulation protein homolog of Saccharolobus islandicus (strain M.14.25 / Kamchatka #1) (Sulfolobus islandicus).